The chain runs to 61 residues: Short neurotoxin 1 (61 aa).

Intrachain disulfides connect Cys3/Cys23, Cys17/Cys40, Cys42/Cys53, and Cys54/Cys59.

Belongs to the three-finger toxin family. Short-chain subfamily. Type I alpha-neurotoxin sub-subfamily. Expressed by the venom gland.

It is found in the secreted. Binds to muscle nicotinic acetylcholine receptor (nAChR) and inhibit acetylcholine from binding to the receptor, thereby impairing neuromuscular transmission. This is Short neurotoxin 1 from Naja philippinensis (Philippine cobra).